Here is a 962-residue protein sequence, read N- to C-terminus: Leucine--tRNA ligase (962 aa).

Residues 41-51 carry the 'HIGH' region motif; it reads PYLNGNLHAGH. The 'KMSKS' region motif lies at 631–635; it reads KMSKS. Lys-634 is an ATP binding site.

It belongs to the class-I aminoacyl-tRNA synthetase family.

The protein resides in the cytoplasm. The enzyme catalyses tRNA(Leu) + L-leucine + ATP = L-leucyl-tRNA(Leu) + AMP + diphosphate. The chain is Leucine--tRNA ligase from Methanococcoides burtonii (strain DSM 6242 / NBRC 107633 / OCM 468 / ACE-M).